Reading from the N-terminus, the 167-residue chain is Leptin (167 aa).

The signal sequence occupies residues 1 to 21 (MRCGPLCRFLWLWPYLSYIEA). The cysteines at positions 117 and 167 are disulfide-linked.

Belongs to the leptin family.

The protein resides in the secreted. In terms of biological role, key player in the regulation of energy balance and body weight control. Once released into the circulation, has central and peripheral effects by binding LEPR, found in many tissues, which results in the activation of several major signaling pathways. In the hypothalamus, acts as an appetite-regulating factor that induces a decrease in food intake and an increase in energy consumption by inducing anorexinogenic factors and suppressing orexigenic neuropeptides, also regulates bone mass and secretion of hypothalamo-pituitary-adrenal hormones. In the periphery, increases basal metabolism, influences reproductive function, regulates pancreatic beta-cell function and insulin secretion, is pro-angiogenic for endothelial cell and affects innate and adaptive immunity. In the arcuate nucleus of the hypothalamus, activates by depolarization POMC neurons inducing FOS and SOCS3 expression to release anorexigenic peptides and inhibits by hyperpolarization NPY neurons inducing SOCS3 with a consequent reduction on release of orexigenic peptides. In addition to its known satiety inducing effect, has a modulatory role in nutrient absorption. In the intestine, reduces glucose absorption by enterocytes by activating PKC and leading to a sequential activation of p38, PI3K and ERK signaling pathways which exerts an inhibitory effect on glucose absorption. Acts as a growth factor on certain tissues, through the activation of different signaling pathways increases expression of genes involved in cell cycle regulation such as CCND1, via JAK2-STAT3 pathway, or VEGFA, via MAPK1/3 and PI3K-AKT1 pathways. May also play an apoptotic role via JAK2-STAT3 pathway and up-regulation of BIRC5 expression. Pro-angiogenic, has mitogenic activity on vascular endothelial cells and plays a role in matrix remodeling by regulating the expression of matrix metalloproteinases (MMPs) and tissue inhibitors of metalloproteinases (TIMPs). In innate immunity, modulates the activity and function of neutrophils by increasing chemotaxis and the secretion of oxygen radicals. Increases phagocytosis by macrophages and enhances secretion of pro-inflammatory mediators. Increases cytotoxic ability of NK cells. Plays a pro-inflammatory role, in synergy with IL1B, by inducing NOS2 which promotes the production of IL6, IL8 and Prostaglandin E2, through a signaling pathway that involves JAK2, PI3K, MAP2K1/MEK1 and MAPK14/p38. In adaptive immunity, promotes the switch of memory T-cells towards T helper-1 cell immune responses. Increases CD4(+)CD25(-) T-cell proliferation and reduces autophagy during TCR (T-cell receptor) stimulation, through MTOR signaling pathway activation and BCL2 up-regulation. The protein is Leptin (LEP) of Ursus thibetanus (Asiatic black bear).